Reading from the N-terminus, the 39-residue chain is Potassium channel toxin alpha-KTx 2.8 (39 aa).

3 disulfide bridges follow: Cys-7–Cys-29, Cys-13–Cys-34, and Cys-17–Cys-36.

It belongs to the short scorpion toxin superfamily. Potassium channel inhibitor family. Alpha-KTx 02 subfamily. As to expression, expressed by the venom gland.

Its subcellular location is the secreted. Blocks Kv1.3/KCNA3 voltage-gated potassium channels of human T-lymphocytes (Kd=0.71 nM). The protein is Potassium channel toxin alpha-KTx 2.8 of Centruroides elegans (Bark scorpion).